The chain runs to 227 residues: MNNFPEIFDDESTCDYDKEIDHQELSDTFWCLMDFISSKHGKSVADINSGMNTLINIRKSLNGSGKVVSITDSYNKTYFHSQRGLTNVDSRINIDILKIDFISIIDDLQIIFRGLIYKDKGFLDSADLLDLDKKTTTRKFQEYFNILKIKIIEKIGMTKTFHFNIDFRNTISPLDKQRKCSISSSHKKTNRLNDLNNYITYLNDNIVLTFRWKGVGFGGLSLNDIKI.

As to quaternary structure, self-associates.

The protein resides in the host cell junction. It localises to the host plasmodesma. In Lettuce infectious yellows virus (isolate United States/92) (LIYV), this protein is Protein p26.